Here is a 218-residue protein sequence, read N- to C-terminus: Small ribosomal subunit protein uS3 (218 aa).

Positions 2–71 constitute a KH type-2 domain; the sequence is SAPQRRLPVY…IGRKGAIVKE (70 aa).

This sequence belongs to the universal ribosomal protein uS3 family. Part of the 30S ribosomal subunit.

Binds the lower part of the 30S subunit head. The protein is Small ribosomal subunit protein uS3 of Pyrobaculum aerophilum (strain ATCC 51768 / DSM 7523 / JCM 9630 / CIP 104966 / NBRC 100827 / IM2).